The primary structure comprises 434 residues: Protein maelstrom homolog (434 aa).

The segment at residues 4 to 73 (RKASRNAYYF…AQGKDPGPSE (70 aa)) is a DNA-binding region (HMG box). Positions 357-385 (SHFNSSNEEQRSNTPIGDYPSRAKISGQN) are disordered.

Belongs to the maelstrom family. In terms of assembly, interacts with SMARCB1, SIN3B and DDX4. Interacts with piRNA-associated proteins TDRD1, PIWIL1 and PIWIL2. Interacts with TEX19. In terms of tissue distribution, testis-specific. Expressed in various cancer cell lines, probably due to demethylation of its promoter.

The protein localises to the cytoplasm. Its subcellular location is the nucleus. Plays a central role during spermatogenesis by repressing transposable elements and preventing their mobilization, which is essential for the germline integrity. Acts via the piRNA metabolic process, which mediates the repression of transposable elements during meiosis by forming complexes composed of piRNAs and Piwi proteins and governs the methylation and subsequent repression of transposons. Its association with piP-bodies suggests a participation in the secondary piRNAs metabolic process. Required for the localization of germ-cell factors to the meiotic nuage. In Homo sapiens (Human), this protein is Protein maelstrom homolog (MAEL).